Consider the following 236-residue polypeptide: Small ribosomal subunit protein uS2c (236 aa).

Belongs to the universal ribosomal protein uS2 family.

The protein resides in the plastid. It localises to the chloroplast. This Buxus microphylla (Littleleaf boxwood) protein is Small ribosomal subunit protein uS2c (rps2).